A 352-amino-acid chain; its full sequence is MITPQQAIERLISNNELFYDEMTDLMRQIMRGQVLPEQIAAILTGLRIKVETVSEITAAAAVMREFATKVPLENAEGLVDIVGTGGDGAKTFNISTTSMFVAAAAGAKVAKHGGRSVSSSSGAADVVEQMGANLNLTPEQVAQSIRQTGIGFMFAPNHHSAMRHVAPVRRSLGFRSIFNILGPLTNPAGAPNQLLGVFHTDLCGILSRVLQQLGSKHVLVVCGEGGLDEITLTGKTRVAELKDGKISEYDIRPEDFGIETRRNLDEIKVANTQESLLKMNEVLEGREGAARDIVLLNTAAALYAGNVAASLSDGISAAREAIDSGRAKSKKEEFVGFQPQQRCHFLGKMELG.

5-phospho-alpha-D-ribose 1-diphosphate is bound by residues glycine 83, 86–87, threonine 91, 93–96, 111–119, and alanine 123; these read GD, NIST, and KHGGRSVSS. Glycine 83 serves as a coordination point for anthranilate. Serine 95 is a binding site for Mg(2+). Position 169 (arginine 169) interacts with anthranilate. Mg(2+)-binding residues include aspartate 228 and glutamate 229.

This sequence belongs to the anthranilate phosphoribosyltransferase family. In terms of assembly, homodimer. Mg(2+) serves as cofactor.

The enzyme catalyses N-(5-phospho-beta-D-ribosyl)anthranilate + diphosphate = 5-phospho-alpha-D-ribose 1-diphosphate + anthranilate. Its pathway is amino-acid biosynthesis; L-tryptophan biosynthesis; L-tryptophan from chorismate: step 2/5. In terms of biological role, catalyzes the transfer of the phosphoribosyl group of 5-phosphorylribose-1-pyrophosphate (PRPP) to anthranilate to yield N-(5'-phosphoribosyl)-anthranilate (PRA). In Neisseria meningitidis serogroup A / serotype 4A (strain DSM 15465 / Z2491), this protein is Anthranilate phosphoribosyltransferase.